The chain runs to 126 residues: MYSSLLSIACGAVLGAWLRWFVGLKFNSTFQNFPLGTILVNLVGGFIIGFAIALFANMQLSSNYKLFVITGFCGALTTFSTFSAEVIDLLQQQKYGFAIALITIHLMGSLLCTVLGLLSYQWLSQH.

Transmembrane regions (helical) follow at residues 4–24 (SLLS…FVGL), 35–55 (LGTI…IALF), 67–87 (FVIT…AEVI), and 97–117 (FAIA…VLGL). Na(+) contacts are provided by Gly74 and Thr77.

Belongs to the fluoride channel Fluc/FEX (TC 1.A.43) family.

Its subcellular location is the cell inner membrane. The enzyme catalyses fluoride(in) = fluoride(out). With respect to regulation, na(+) is not transported, but it plays an essential structural role and its presence is essential for fluoride channel function. In terms of biological role, fluoride-specific ion channel. Important for reducing fluoride concentration in the cell, thus reducing its toxicity. The protein is Fluoride-specific ion channel FluC of Acinetobacter baylyi (strain ATCC 33305 / BD413 / ADP1).